The chain runs to 437 residues: ATP-dependent protease ATPase subunit HslU (437 aa).

Residues valine 18, 60–65 (GCGKTE), aspartate 250, glutamate 315, and arginine 387 contribute to the ATP site.

It belongs to the ClpX chaperone family. HslU subfamily. As to quaternary structure, a double ring-shaped homohexamer of HslV is capped on each side by a ring-shaped HslU homohexamer. The assembly of the HslU/HslV complex is dependent on binding of ATP.

The protein localises to the cytoplasm. Functionally, ATPase subunit of a proteasome-like degradation complex; this subunit has chaperone activity. The binding of ATP and its subsequent hydrolysis by HslU are essential for unfolding of protein substrates subsequently hydrolyzed by HslV. HslU recognizes the N-terminal part of its protein substrates and unfolds these before they are guided to HslV for hydrolysis. This chain is ATP-dependent protease ATPase subunit HslU, found in Methylorubrum extorquens (strain PA1) (Methylobacterium extorquens).